A 420-amino-acid chain; its full sequence is Acetyl-CoA acetyltransferase B, mitochondrial (420 aa).

The transit peptide at 1–33 (MAFCGPRTAARLSHSTRALHYTHRSFASPRTLN) directs the protein to the mitochondrion. The active-site Acyl-thioester intermediate is Cys-119. Residues Tyr-212, 251–253 (RVD), and Lys-256 each bind CoA. Tyr-212 serves as a coordination point for K(+). K(+) is bound by residues Ala-273 and Ala-274. Ser-277 is a CoA binding site. Val-374 contacts K(+). Catalysis depends on Cys-406, which acts as the Proton donor/acceptor.

The protein belongs to the thiolase-like superfamily. Thiolase family. In terms of assembly, homotetramer.

The protein localises to the mitochondrion. The enzyme catalyses 2 acetyl-CoA = acetoacetyl-CoA + CoA. It carries out the reaction propanoyl-CoA + acetyl-CoA = 2-methyl-3-oxobutanoyl-CoA + CoA. It functions in the pathway lipid metabolism; fatty acid beta-oxidation. In terms of biological role, this is one of the enzymes that catalyzes the last step of the mitochondrial beta-oxidation pathway, an aerobic process breaking down fatty acids into acetyl-CoA. Using free coenzyme A/CoA, catalyzes the thiolytic cleavage of medium- to long-chain 3-oxoacyl-CoAs into acetyl-CoA and a fatty acyl-CoA shortened by two carbon atoms. The activity of the enzyme is reversible and it can also catalyze the condensation of two acetyl-CoA molecules into acetoacetyl-CoA. Thereby, it plays a major role in ketone body metabolism. The protein is Acetyl-CoA acetyltransferase B, mitochondrial (acat1-b) of Xenopus laevis (African clawed frog).